The chain runs to 159 residues: MTDAATLSTAGFDLTPPTEAERERLEANLTAEEARVLLHHGTEAPFCGGLLGEKSPGVYGCRLCGLPLFKHETKFESGTGWPSFYAPFAEDHVVGVRDTSYGMVRIETRCARCDSHQGHVFPDGPAPTRLRYCINSVSLQFVKAGAPLPDPLHRGDKIT.

In terms of domain architecture, MsrB spans arginine 22 to alanine 144. Residues cysteine 61, cysteine 64, cysteine 110, and cysteine 113 each coordinate Zn(2+). The active-site Nucleophile is the cysteine 133.

The protein belongs to the MsrB Met sulfoxide reductase family. Requires Zn(2+) as cofactor.

It catalyses the reaction L-methionyl-[protein] + [thioredoxin]-disulfide + H2O = L-methionyl-(R)-S-oxide-[protein] + [thioredoxin]-dithiol. This Caulobacter vibrioides (strain ATCC 19089 / CIP 103742 / CB 15) (Caulobacter crescentus) protein is Peptide methionine sulfoxide reductase MsrB.